Consider the following 965-residue polypeptide: UvrABC system protein A (965 aa).

32 to 39 (GLSGSGKS) lines the ATP pocket. The segment at 254 to 281 (CPVCDYSLPELEPRLFSFNAPMGACPAC) adopts a C4-type zinc-finger fold. 2 ABC transporter domains span residues 311 to 588 (WDRR…PRSL) and 608 to 937 (PNAT…HFLA). 641–648 (GVSGSGKS) contributes to the ATP binding site. The segment at 740 to 766 (CEACEGDGLIKVEMHFLPDVYVPCDIC) adopts a C4-type zinc-finger fold.

It belongs to the ABC transporter superfamily. UvrA family. As to quaternary structure, forms a heterotetramer with UvrB during the search for lesions.

The protein resides in the cytoplasm. Functionally, the UvrABC repair system catalyzes the recognition and processing of DNA lesions. UvrA is an ATPase and a DNA-binding protein. A damage recognition complex composed of 2 UvrA and 2 UvrB subunits scans DNA for abnormalities. When the presence of a lesion has been verified by UvrB, the UvrA molecules dissociate. The protein is UvrABC system protein A of Xylella fastidiosa (strain Temecula1 / ATCC 700964).